The primary structure comprises 312 residues: Serine protease 48 (312 aa).

Residues 1–22 (MGPAGLKVLLLLFLGAFQGSFT) form the signal peptide. The 237-residue stretch at 40–276 (IVGGQDAALG…YQKWISAIIS (237 aa)) folds into the Peptidase S1 domain. The cysteines at positions 65 and 81 are disulfide-linked. Active-site charge relay system residues include His-80 and Asp-126. The N-linked (GlcNAc...) asparagine glycan is linked to Asn-149. Cystine bridges form between Cys-160–Cys-235, Cys-190–Cys-214, and Cys-225–Cys-253. Residue Ser-229 is the Charge relay system of the active site. Asn-263 carries an N-linked (GlcNAc...) asparagine glycan.

Belongs to the peptidase S1 family.

It localises to the secreted. The chain is Serine protease 48 (Prss48) from Mus musculus (Mouse).